The primary structure comprises 85 residues: U1-ctenitoxin-Pn1a (85 aa).

The signal sequence occupies residues 1 to 16 (MKVAIVFLSLLVLAFA). Positions 17–34 (SESIEENREEFPVEESAR) are excised as a propeptide. Disulfide bonds link cysteine 35–cysteine 49, cysteine 42–cysteine 55, cysteine 46–cysteine 81, cysteine 48–cysteine 65, and cysteine 57–cysteine 63. A propeptide spanning residues 82-85 (QNKI) is cleaved from the precursor.

The protein belongs to the neurotoxin 03 (Tx2) family. 05 subfamily. In terms of tissue distribution, expressed by the venom gland.

It is found in the secreted. Its function is as follows. Insecticidal neurotoxin that reversibly inhibits the N-methyl-D-aspartate (NMDA)-subtype of ionotropic glutamate receptor (GRIN) and inhibits inactivation of insect sodium channels (Nav). In vivo, is highly toxic to insects. The polypeptide is U1-ctenitoxin-Pn1a (Phoneutria nigriventer (Brazilian armed spider)).